The following is a 64-amino-acid chain: uncharacterized protein (64 aa).

This is an uncharacterized protein from Methanothermobacter thermautotrophicus (strain ATCC 29096 / DSM 1053 / JCM 10044 / NBRC 100330 / Delta H) (Methanobacterium thermoautotrophicum).